The chain runs to 305 residues: Olfactory receptor 9G19 (305 aa).

The Extracellular segment spans residues 1 to 24 (MDQNNNTVSEFIMLGFTTDPVIQK). The helical transmembrane segment at 25–45 (VLFAVFLVVYTLTLMGNSSLI) threads the bilayer. The Cytoplasmic segment spans residues 46–55 (MLICNDSRLH). Residues 56 to 76 (TPMYFFIGNLSFLDLGLSSVY) form a helical membrane-spanning segment. The Extracellular segment spans residues 77-96 (TPKILETCISEDKSISFAGC). A disulfide bridge connects residues Cys96 and Cys178. The helical transmembrane segment at 97 to 117 (VAQFFFSAALDYTECYLLAAM) threads the bilayer. Topologically, residues 118–138 (AYDRYVAISKPLLYSQAMSLK) are cytoplasmic. The helical transmembrane segment at 139–159 (LCVCFVVASYVGGFINSVIIT) threads the bilayer. Residues 160-204 (KDTFALTFCNDNVIDDFFCDIPPLVKLACGKKKSFQSVLFFLLTS) lie on the Extracellular side of the membrane. Residues 205–225 (NVIIPIVFILATYLFIIATIL) traverse the membrane as a helical segment. Over 226-236 (RIRSTQGRLKA) the chain is Cytoplasmic. Residues 237 to 257 (FSTCSSHLISVTLYYGSILYI) traverse the membrane as a helical segment. The Extracellular portion of the chain corresponds to 258-270 (YARPRSSYSLDRD). A helical transmembrane segment spans residues 271–291 (KIVSTFYTVVFPMLNPLIYSL). Residues 292–305 (RNKDVKEALNKLLK) lie on the Cytoplasmic side of the membrane.

This sequence belongs to the G-protein coupled receptor 1 family.

Its subcellular location is the cell membrane. Odorant receptor. The chain is Olfactory receptor 9G19 from Mus musculus (Mouse).